The following is a 164-amino-acid chain: Elicitin-like protein 2 (164 aa).

Residues 1 to 22 (MFSKTLVVLAAVAAVTVNGLTA) form the signal peptide. Intrachain disulfides connect Cys-25-Cys-91, Cys-47-Cys-76, and Cys-71-Cys-118. A disordered region spans residues 121 to 164 (ISGGGSTPTTAPPSGTTPTTPTTAPPTGTTPGVTPSPTTPKPAC). Residues 127–156 (TPTTAPPSGTTPTTPTTAPPTGTTPGVTPS) show a composition bias toward low complexity.

Belongs to the elicitin family.

Its subcellular location is the secreted. Functionally, induces local and distal defense responses (incompatible hypersensitive reaction) in plants from the solanaceae and cruciferae families. Elicits leaf necrosis and causes the accumulation of pathogenesis-related proteins. Might interact with the lipidic molecules of the plasma membrane. This chain is Elicitin-like protein 2 (POD-2), found in Pythium oligandrum (Mycoparasitic fungus).